The sequence spans 461 residues: Squalene synthase BSS (461 aa).

Residues Arg-51 and Arg-76 each coordinate NADP(+). Asp-79, Glu-82, and Asp-83 together coordinate Mg(2+). NADP(+)-binding residues include Arg-219, Lys-322, and Arg-324. The chain crosses the membrane as a helical span at residues 430-450 (VTQHWWSILIFLISIAVFFIP).

Belongs to the phytoene/squalene synthase family. It depends on Mg(2+) as a cofactor.

The protein localises to the endoplasmic reticulum membrane. The catalysed reaction is 2 (2E,6E)-farnesyl diphosphate + NADPH + H(+) = squalene + 2 diphosphate + NADP(+). The enzyme catalyses 2 (2E,6E)-farnesyl diphosphate + NADH + H(+) = squalene + 2 diphosphate + NAD(+). Functionally, converts farnesyl diphosphate (FPP) into squalene, a precursor for sterol biosynthesis in eukaryotes. Does not possess botryococcene synthase activity. This is Squalene synthase BSS from Botryococcus braunii (Green alga).